A 932-amino-acid chain; its full sequence is Glycine dehydrogenase (decarboxylating) (932 aa).

An N6-(pyridoxal phosphate)lysine modification is found at lysine 685.

The protein belongs to the GcvP family. As to quaternary structure, the glycine cleavage system is composed of four proteins: P, T, L and H. The cofactor is pyridoxal 5'-phosphate.

The catalysed reaction is N(6)-[(R)-lipoyl]-L-lysyl-[glycine-cleavage complex H protein] + glycine + H(+) = N(6)-[(R)-S(8)-aminomethyldihydrolipoyl]-L-lysyl-[glycine-cleavage complex H protein] + CO2. In terms of biological role, the glycine cleavage system catalyzes the degradation of glycine. The P protein binds the alpha-amino group of glycine through its pyridoxal phosphate cofactor; CO(2) is released and the remaining methylamine moiety is then transferred to the lipoamide cofactor of the H protein. The chain is Glycine dehydrogenase (decarboxylating) from Brucella abortus (strain S19).